We begin with the raw amino-acid sequence, 412 residues long: Multifunctional CCA protein (412 aa).

Residues glycine 8 and arginine 11 each coordinate ATP. Glycine 8 and arginine 11 together coordinate CTP. Residues aspartate 21 and aspartate 23 each contribute to the Mg(2+) site. Residues arginine 91, arginine 137, and arginine 140 each contribute to the ATP site. The CTP site is built by arginine 91, arginine 137, and arginine 140. An HD domain is found at 228 to 329; that stretch reads TGIHTLMTLS…VKLFDSIDAW (102 aa).

This sequence belongs to the tRNA nucleotidyltransferase/poly(A) polymerase family. Bacterial CCA-adding enzyme type 1 subfamily. In terms of assembly, monomer. Can also form homodimers and oligomers. The cofactor is Mg(2+). Ni(2+) serves as cofactor.

The enzyme catalyses a tRNA precursor + 2 CTP + ATP = a tRNA with a 3' CCA end + 3 diphosphate. It carries out the reaction a tRNA with a 3' CCA end + 2 CTP + ATP = a tRNA with a 3' CCACCA end + 3 diphosphate. Its function is as follows. Catalyzes the addition and repair of the essential 3'-terminal CCA sequence in tRNAs without using a nucleic acid template. Adds these three nucleotides in the order of C, C, and A to the tRNA nucleotide-73, using CTP and ATP as substrates and producing inorganic pyrophosphate. tRNA 3'-terminal CCA addition is required both for tRNA processing and repair. Also involved in tRNA surveillance by mediating tandem CCA addition to generate a CCACCA at the 3' terminus of unstable tRNAs. While stable tRNAs receive only 3'-terminal CCA, unstable tRNAs are marked with CCACCA and rapidly degraded. The polypeptide is Multifunctional CCA protein (Escherichia coli O7:K1 (strain IAI39 / ExPEC)).